The sequence spans 417 residues: Tyrosine--tRNA ligase (417 aa).

Tyr-39 is an L-tyrosine binding site. The 'HIGH' region signature appears at 44–53 (PTAASLHAGG). Residues Tyr-176 and Gln-180 each contribute to the L-tyrosine site. The 'KMSKS' region motif lies at 236 to 240 (KMGKS). ATP is bound at residue Lys-239. In terms of domain architecture, S4 RNA-binding spans 350–417 (LGLLTLLVRA…KKKHLLVRPV (68 aa)).

This sequence belongs to the class-I aminoacyl-tRNA synthetase family. TyrS type 1 subfamily. As to quaternary structure, homodimer.

The protein resides in the cytoplasm. The catalysed reaction is tRNA(Tyr) + L-tyrosine + ATP = L-tyrosyl-tRNA(Tyr) + AMP + diphosphate + H(+). Functionally, catalyzes the attachment of tyrosine to tRNA(Tyr) in a two-step reaction: tyrosine is first activated by ATP to form Tyr-AMP and then transferred to the acceptor end of tRNA(Tyr). This Rhizobium meliloti (strain 1021) (Ensifer meliloti) protein is Tyrosine--tRNA ligase.